Consider the following 165-residue polypeptide: Endoribonuclease YbeY (165 aa).

Zn(2+) is bound by residues His130, His134, and His140.

It belongs to the endoribonuclease YbeY family. Zn(2+) serves as cofactor.

The protein resides in the cytoplasm. Single strand-specific metallo-endoribonuclease involved in late-stage 70S ribosome quality control and in maturation of the 3' terminus of the 16S rRNA. This Streptococcus sanguinis (strain SK36) protein is Endoribonuclease YbeY.